Consider the following 166-residue polypeptide: Plastocyanin, chloroplastic (166 aa).

The transit peptide at 1–67 (MASLTSAAVT…GAVLASNALA (67 aa)) directs the protein to the chloroplast. One can recognise a Plastocyanin-like domain in the interval 68–166 (VEVLLGGSDG…AGMAGKITVN (99 aa)). Residues His104, Cys151, His154, and Met159 each contribute to the Cu cation site.

The protein belongs to the plastocyanin family. Requires Cu(2+) as cofactor.

It localises to the plastid. Its subcellular location is the chloroplast thylakoid membrane. In terms of biological role, participates in electron transfer between P700 and the cytochrome b6-f complex in photosystem I. The chain is Plastocyanin, chloroplastic (PETE) from Fritillaria agrestis (Stinkbells).